We begin with the raw amino-acid sequence, 571 residues long: Hemagglutinin-neuraminidase (571 aa).

Residues 1 to 26 lie on the Intravirion side of the membrane; the sequence is MDRAVGRVALENEEREAKNTWRFVFR. Residues 27-47 form a helical membrane-spanning segment; that stretch reads IAIFLLIVITLAISAAALVYS. Over 48-571 the chain is Virion surface; sequence MEASTPGDLV…LVEILKEDGV (524 aa). Asn119 is a glycosylation site (N-linked (GlcNAc...) asparagine; by host). Residues 124–152 are important for interaction with fusion/F protein; it reads GAPVHDPDYIGGIGKELIVDDASDVTSFY. Disulfide bonds link Cys172-Cys196, Cys186-Cys247, and Cys238-Cys251. Residues 234 to 239 are involved in neuraminidase activity; the sequence is NRKSCS. Asn341 and Asn433 each carry an N-linked (GlcNAc...) asparagine; by host glycan. Intrachain disulfides connect Cys344-Cys461 and Cys455-Cys465. Asn481, Asn508, and Asn538 each carry an N-linked (GlcNAc...) asparagine; by host glycan. Cys531 and Cys542 are joined by a disulfide.

It belongs to the paramyxoviruses hemagglutinin-neuraminidase family. As to quaternary structure, homotetramer; composed of disulfide-linked homodimers. Interacts with F protein trimer. Interacts with host CG-1B; this interaction inhibits viral adsorption and replication rather than internalization.

The protein resides in the virion membrane. It is found in the host cell membrane. The enzyme catalyses Hydrolysis of alpha-(2-&gt;3)-, alpha-(2-&gt;6)-, alpha-(2-&gt;8)- glycosidic linkages of terminal sialic acid residues in oligosaccharides, glycoproteins, glycolipids, colominic acid and synthetic substrates.. Functionally, mediates the viral entry into the host cell together with fusion/F protein. Attaches the virus to sialic acid-containing cell receptors and thereby initiates infection. Binding of HN protein to the receptor induces a conformational change that allows the F protein to trigger virion/cell membranes fusion. Its function is as follows. Neuraminidase activity ensures the efficient spread of the virus by dissociating the mature virions from the neuraminic acid containing glycoproteins. This Gallus gallus (Chicken) protein is Hemagglutinin-neuraminidase (HN).